The primary structure comprises 351 residues: UDP-N-acetylglucosamine--N-acetylmuramyl-(pentapeptide) pyrophosphoryl-undecaprenol N-acetylglucosamine transferase (351 aa).

Residues 12–14 (TGG), Asn-124, Arg-160, Ser-188, Ile-239, 258–263 (ALTVCE), and Gln-283 each bind UDP-N-acetyl-alpha-D-glucosamine.

The protein belongs to the glycosyltransferase 28 family. MurG subfamily.

The protein localises to the cell inner membrane. It catalyses the reaction di-trans,octa-cis-undecaprenyl diphospho-N-acetyl-alpha-D-muramoyl-L-alanyl-D-glutamyl-meso-2,6-diaminopimeloyl-D-alanyl-D-alanine + UDP-N-acetyl-alpha-D-glucosamine = di-trans,octa-cis-undecaprenyl diphospho-[N-acetyl-alpha-D-glucosaminyl-(1-&gt;4)]-N-acetyl-alpha-D-muramoyl-L-alanyl-D-glutamyl-meso-2,6-diaminopimeloyl-D-alanyl-D-alanine + UDP + H(+). It functions in the pathway cell wall biogenesis; peptidoglycan biosynthesis. Its function is as follows. Cell wall formation. Catalyzes the transfer of a GlcNAc subunit on undecaprenyl-pyrophosphoryl-MurNAc-pentapeptide (lipid intermediate I) to form undecaprenyl-pyrophosphoryl-MurNAc-(pentapeptide)GlcNAc (lipid intermediate II). The sequence is that of UDP-N-acetylglucosamine--N-acetylmuramyl-(pentapeptide) pyrophosphoryl-undecaprenol N-acetylglucosamine transferase from Actinobacillus pleuropneumoniae serotype 7 (strain AP76).